Here is a 1505-residue protein sequence, read N- to C-terminus: Myosin-6 (1505 aa).

The region spanning 8–57 is the Myosin N-terminal SH3-like domain; sequence SVGSFVWVEDPDEAWIDGEVVQVNGDEIKVLCTSGKHVVTKISNAYPKDV. Residues 62–731 form the Myosin motor domain; that stretch reads SGVDDMTRLA…QMADLDTRRT (670 aa). Residues 156–163 and 209–217 contribute to the ATP site; these read GESGAGKT and NNNSSRFGK. Actin-binding regions lie at residues 495–529, 531–554, 589–612, and 612–634; these read LIEK…YQTF, THKR…AGDV, FPPM…KQQL, and LVSL…KPNN. IQ domains follow at residues 734-763, 757-786, 782-811, 805-834, 830-859, and 853-882; these read LGRS…SAKQ, LRNS…EAAA, REAA…AAVS, LYSA…TKAA, QTKA…AAIT, and LKKA…AARE. Residues 883 to 1048 adopt a coiled-coil conformation; it reads TGALQAAKNK…AEKKIMHQQT (166 aa). In terms of domain architecture, Dilute spans 1148 to 1452; it reads DRLIQMIGSA…ISSMRTLMTE (305 aa).

The protein belongs to the TRAFAC class myosin-kinesin ATPase superfamily. Myosin family. Plant myosin class XI subfamily. As to quaternary structure, homodimer. Interacts with RABC2A and RABD1. In terms of tissue distribution, expressed in flowers, leaves, roots and stems.

The protein localises to the cytoplasm. In terms of biological role, myosin heavy chain that is required for the cell cycle-regulated transport of various organelles and proteins for their segregation. Functions by binding with its tail domain to receptor proteins on organelles and exerting force with its N-terminal motor domain against actin filaments, thereby transporting its cargo along polarized actin cables. Involved in the tip growth of root hair cells. Plays a major role in trafficking of Golgi stacks, mitochondria and peroxisomes during root hair development. Targets the peroxisome through an interaction with RABC2A. Required for development of pavement cells, trichomes, and stigmatic papillae. In Arabidopsis thaliana (Mouse-ear cress), this protein is Myosin-6 (XI-2).